Consider the following 169-residue polypeptide: Myelin basic protein (169 aa).

A1 carries the N-acetylalanine modification. The segment at 1 to 114 (AAQKRPSQRS…GRGLSLSRFS (114 aa)) is disordered. The residue at position 7 (S7) is a Phosphoserine; in C5 and C6. S10 is subject to Phosphoserine. Y12 is subject to Phosphotyrosine. S17 is subject to Phosphoserine. Phosphothreonine is present on T18. R23 carries the citrulline; in form C8b modification. A Citrulline modification is found at R29. T33 bears the Phosphothreonine mark. At S38 the chain carries Phosphoserine. R41 is subject to Citrulline; alternate. R41 is subject to Omega-N-methylarginine; alternate. Residues 43-87 (FGSDRGAPKRGSGKDGHHAARTTHYGSLPQKAQGHRPQDENPVVH) are induces experimental autoimmune encephalomyelitis (EAE) 1. R47 bears the Citrulline; in form C8b mark. R47 is subject to Omega-N-methylarginine. S54 is subject to Phosphoserine; in C4, C5 and C6. The residue at position 63 (R63) is a Citrulline. T65 bears the Phosphothreonine mark. Y67 carries the phosphotyrosine modification. T94 is modified (phosphothreonine). R96 carries the post-translational modification Citrulline; in form C2, C3, C8a and C8b. T97 is modified (phosphothreonine; by MAPK; in C3, C4, C5 and C6). At Q102 the chain carries Deamidated glutamine; in form C5. R106 bears the Citrulline; alternate mark. R106 bears the Omega-N-methylarginine; alternate mark. The residue at position 106 (R106) is a Symmetric dimethylarginine; alternate. R112 carries the post-translational modification Citrulline. S114 is modified (phosphoserine). Positions 114–122 (SWGAEGQKP) are induces experimental autoimmune encephalomyelitis (EAE) 2. Deamidated glutamine; in form C3 is present on Q120. Residue K121 is modified to N6-acetyllysine. A Citrulline modification is found at R129. The interval 133–169 (YKSAHKGLKGHDAQGTLSKIFKLGGRDSRSGSPMARR) is disordered. Position 146 is a deamidated glutamine; in form C2 (Q146). R158 carries the citrulline modification. Phosphoserine; in C4 and C6 is present on S160. A Citrulline; in form C3 modification is found at R161. S164 is subject to Phosphoserine; in form C3, C5 and C6. Citrulline occurs at positions 168 and 169.

This sequence belongs to the myelin basic protein family. Homodimer; self-associates in the presence of lysolipid. At least 6 charge isomers; C1 (the most cationic and least modified form), C2, C3, C4, C5 and C6 (the least cationic form); are produced as a result of optional post-translational modifications, such as phosphorylation of serine or threonine residues, deamidation of glutamine or asparagine residues, citrullination and methylation of arginine residues. In terms of processing, phosphorylated by TAOK2, VRK2, MAPK11, MAPK12, MAPK14 and MINK1. Post-translationally, proteolytically cleaved in B cell lysosomes by cathepsin CTSG which degrades the major immunogenic MBP epitope and prevents the activation of MBP-specific autoreactive T cells. As to expression, found in both the central and the peripheral nervous system.

The protein resides in the myelin membrane. Is, with PLP, the most abundant protein component of the myelin membrane in the CNS. Has a role in both the formation and stabilization of this compact multilayer arrangement of bilayers. Each splice variant and charge isomer may have a specialized function in the assembly of an optimized, biochemically functional myelin membrane. This Bos taurus (Bovine) protein is Myelin basic protein (MBP).